The chain runs to 180 residues: NAD(P)H-quinone oxidoreductase subunit I, chloroplastic (180 aa).

2 consecutive 4Fe-4S ferredoxin-type domains span residues 55–84 (GRIH…VDWK) and 95–124 (LNYS…MTEE). [4Fe-4S] cluster is bound by residues cysteine 64, cysteine 67, cysteine 70, cysteine 74, cysteine 104, cysteine 107, cysteine 110, and cysteine 114.

This sequence belongs to the complex I 23 kDa subunit family. In terms of assembly, NDH is composed of at least 16 different subunits, 5 of which are encoded in the nucleus. The cofactor is [4Fe-4S] cluster.

It is found in the plastid. Its subcellular location is the chloroplast thylakoid membrane. The enzyme catalyses a plastoquinone + NADH + (n+1) H(+)(in) = a plastoquinol + NAD(+) + n H(+)(out). It carries out the reaction a plastoquinone + NADPH + (n+1) H(+)(in) = a plastoquinol + NADP(+) + n H(+)(out). Its function is as follows. NDH shuttles electrons from NAD(P)H:plastoquinone, via FMN and iron-sulfur (Fe-S) centers, to quinones in the photosynthetic chain and possibly in a chloroplast respiratory chain. The immediate electron acceptor for the enzyme in this species is believed to be plastoquinone. Couples the redox reaction to proton translocation, and thus conserves the redox energy in a proton gradient. This chain is NAD(P)H-quinone oxidoreductase subunit I, chloroplastic, found in Ranunculus macranthus (Large buttercup).